We begin with the raw amino-acid sequence, 329 residues long: Ribosomal RNA small subunit methyltransferase H (329 aa).

S-adenosyl-L-methionine is bound by residues 47–49 (GGH), Asp-67, Phe-93, Asp-115, and Gln-122.

The protein belongs to the methyltransferase superfamily. RsmH family.

The protein resides in the cytoplasm. The catalysed reaction is cytidine(1402) in 16S rRNA + S-adenosyl-L-methionine = N(4)-methylcytidine(1402) in 16S rRNA + S-adenosyl-L-homocysteine + H(+). In terms of biological role, specifically methylates the N4 position of cytidine in position 1402 (C1402) of 16S rRNA. The protein is Ribosomal RNA small subunit methyltransferase H of Blochmanniella pennsylvanica (strain BPEN).